The sequence spans 309 residues: HPr kinase/phosphorylase (309 aa).

Catalysis depends on residues His-138 and Lys-159. ATP is bound at residue 153-160; sequence GDSGIGKS. Ser-160 is a Mg(2+) binding site. The active-site Proton acceptor; for phosphorylation activity. Proton donor; for dephosphorylation activity is Asp-177. The interval 201–210 is important for the catalytic mechanism of both phosphorylation and dephosphorylation; sequence LEIRGVGIID. A Mg(2+)-binding site is contributed by Glu-202. The active site involves Arg-243. Positions 264-269 are important for the catalytic mechanism of dephosphorylation; that stretch reads PVKTGR.

The protein belongs to the HPrK/P family. In terms of assembly, homohexamer. Mg(2+) is required as a cofactor.

It catalyses the reaction [HPr protein]-L-serine + ATP = [HPr protein]-O-phospho-L-serine + ADP + H(+). The enzyme catalyses [HPr protein]-O-phospho-L-serine + phosphate + H(+) = [HPr protein]-L-serine + diphosphate. In terms of biological role, catalyzes the ATP- as well as the pyrophosphate-dependent phosphorylation of a specific serine residue in HPr, a phosphocarrier protein of the phosphoenolpyruvate-dependent sugar phosphotransferase system (PTS). HprK/P also catalyzes the pyrophosphate-producing, inorganic phosphate-dependent dephosphorylation (phosphorolysis) of seryl-phosphorylated HPr (P-Ser-HPr). The two antagonistic activities of HprK/P are regulated by several intracellular metabolites, which change their concentration in response to the absence or presence of rapidly metabolisable carbon sources (glucose, fructose, etc.) in the growth medium. Therefore, by controlling the phosphorylation state of HPr, HPrK/P is a sensor enzyme that plays a major role in the regulation of carbon metabolism and sugar transport: it mediates carbon catabolite repression (CCR), and regulates PTS-catalyzed carbohydrate uptake and inducer exclusion. The polypeptide is HPr kinase/phosphorylase (Streptococcus thermophilus (strain CNRZ 1066)).